The chain runs to 472 residues: 2-methylcitrate synthase, mitochondrial (472 aa).

The transit peptide at 1 to 29 directs the protein to the mitochondrion; sequence MALNLTTSRRALGSLKPLTRAAFVGARGY. Residues R75 and K193 each coordinate CoA. An oxaloacetate-binding site is contributed by H271. Residue L306 participates in CoA binding. H307 is a catalytic residue. V348, G350, and Y351 together coordinate CoA. Oxaloacetate is bound by residues H353 and R362. The active site involves H353. CoA contacts are provided by T402, K403, and N408. D410 is an active-site residue. Oxaloacetate contacts are provided by R436 and R456.

It belongs to the citrate synthase family. Homodimer.

It localises to the mitochondrion matrix. It catalyses the reaction propanoyl-CoA + oxaloacetate + H2O = (2S,3S)-2-methylcitrate + CoA + H(+). The enzyme catalyses oxaloacetate + acetyl-CoA + H2O = citrate + CoA + H(+). It functions in the pathway organic acid metabolism; propanoate degradation. Functionally, component of the methylcitrate cycle that catalyzes the synthesis of (2S,3S)-2-methylcitrate from propionyl-CoA and oxaloacetate. Plays an important role in detoxification of propionyl-CoA, an inhibitor of both primary and secondary metabolism. Also has citrate synthase activity using as substrates acetyl-CoA and oxaloacetate. This is 2-methylcitrate synthase, mitochondrial from Fusarium solani (Filamentous fungus).